Consider the following 459-residue polypeptide: Trichothecene 3-O-acetyltransferase TRI101 (459 aa).

Ca(2+) contacts are provided by aspartate 218 and isoleucine 221. Residues lysine 253, 266–269, aspartate 302, glutamine 318, and arginine 343 contribute to the CoA site; that span reads FVST. Residue aspartate 376 participates in Ca(2+) binding. Residues serine 386 and lysine 390 each coordinate CoA. Glutamate 449 serves as a coordination point for Ca(2+).

Belongs to the trichothecene 3-O-acetyltransferase family.

It participates in sesquiterpene biosynthesis; trichothecene biosynthesis. 3-O-acetyltransferase involved in the biosynthesis of trichothecenes, a very large family of chemically related bicyclic sesquiterpene compounds acting as mycotoxins, including T2-toxin. The biosynthesis of trichothecenes begins with the cyclization of farnesyl diphosphate to trichodiene and is catalyzed by the trichodiene synthase TRI5. Trichodiene undergoes a series of oxygenations catalyzed by the cytochrome P450 monooxygenase TRI4. TRI4 controls the addition of four oxygens at C-2, C-3, C-11, and the C-12, C-13-epoxide to form the intermediate isotrichotriol. Isotrichotriol then undergoes a non-enzymatic isomerization and cyclization to form isotrichodermol. During this process, the oxygen at the C-2 position becomes the pyran ring oxygen and the hydroxyl group at C-11 is lost. More complex type A trichothecenes are built by modifying isotrichodermol through a series of paired hydroxylation and acetylation or acylation steps. Isotrichodermol is converted to isotrichodermin by the acetyltransferase TRI101. TRI101 encodes a C-3 transacetylase that acts as a self-protection or resistance factor during biosynthesis and that the presence of a free C-3 hydroxyl group is a key component of Fusarium trichothecene phytotoxicity. A second hydroxyl group is added to C-15 by the trichothecene C-15 hydroxylase TRI11, producing 15-decalonectrin, which is then acetylated by TRI3, producing calonectrin. A third hydroxyl group is added at C-4 by the cytochrome P450 monooxygenase TRI13, converting calonectrin to 3,15-diacetoxyspirpenol, which is subsequently acetylated bythe acetyltransferase TRI7. A fourth hydroxyl group is added to C-8 by the cytochrome P450 monooxygenase TRI1, followed by the addition of an isovaleryl moiety by TRI16. Finally, the acetyl group is removed from the C-3 position by the trichothecene C-3 esterase TRI8 to produce T-2 toxin. The sequence is that of Trichothecene 3-O-acetyltransferase TRI101 from Fusarium sporotrichioides.